The following is a 260-amino-acid chain: Cytochrome c oxidase subunit 3 (260 aa).

The next 6 helical transmembrane spans lie at 30-50 (LILW…VLLV), 81-101 (GMIL…WAFF), 126-146 (FLVP…VTWA), 158-178 (AIQS…LQAW), 196-216 (FFVA…FLAV), and 239-259 (WYWH…YWWG).

The protein belongs to the cytochrome c oxidase subunit 3 family. As to quaternary structure, component of the cytochrome c oxidase (complex IV, CIV), a multisubunit enzyme composed of a catalytic core of 3 subunits and several supernumerary subunits. The complex exists as a monomer or a dimer and forms supercomplexes (SCs) in the inner mitochondrial membrane with ubiquinol-cytochrome c oxidoreductase (cytochrome b-c1 complex, complex III, CIII).

The protein resides in the mitochondrion inner membrane. It carries out the reaction 4 Fe(II)-[cytochrome c] + O2 + 8 H(+)(in) = 4 Fe(III)-[cytochrome c] + 2 H2O + 4 H(+)(out). In terms of biological role, component of the cytochrome c oxidase, the last enzyme in the mitochondrial electron transport chain which drives oxidative phosphorylation. The respiratory chain contains 3 multisubunit complexes succinate dehydrogenase (complex II, CII), ubiquinol-cytochrome c oxidoreductase (cytochrome b-c1 complex, complex III, CIII) and cytochrome c oxidase (complex IV, CIV), that cooperate to transfer electrons derived from NADH and succinate to molecular oxygen, creating an electrochemical gradient over the inner membrane that drives transmembrane transport and the ATP synthase. Cytochrome c oxidase is the component of the respiratory chain that catalyzes the reduction of oxygen to water. Electrons originating from reduced cytochrome c in the intermembrane space (IMS) are transferred via the dinuclear copper A center (CU(A)) of subunit 2 and heme A of subunit 1 to the active site in subunit 1, a binuclear center (BNC) formed by heme A3 and copper B (CU(B)). The BNC reduces molecular oxygen to 2 water molecules using 4 electrons from cytochrome c in the IMS and 4 protons from the mitochondrial matrix. This Pisaster ochraceus (Ochre sea star) protein is Cytochrome c oxidase subunit 3 (COIII).